The following is a 517-amino-acid chain: GMP synthase [glutamine-hydrolyzing] (517 aa).

A Glutamine amidotransferase type-1 domain is found at 9 to 202 (KIIVLDYGSQ…AFNVCKAKGD (194 aa)). Cys-86 functions as the Nucleophile in the catalytic mechanism. Residues His-176 and Glu-178 contribute to the active site. The 190-residue stretch at 203–392 (WSMDSFIDME…LGMPDEIVWR (190 aa)) folds into the GMPS ATP-PPase domain. An ATP-binding site is contributed by 230–236 (SGGVDSS).

Homodimer.

The catalysed reaction is XMP + L-glutamine + ATP + H2O = GMP + L-glutamate + AMP + diphosphate + 2 H(+). It participates in purine metabolism; GMP biosynthesis; GMP from XMP (L-Gln route): step 1/1. Catalyzes the synthesis of GMP from XMP. The polypeptide is GMP synthase [glutamine-hydrolyzing] (Streptococcus mutans serotype c (strain ATCC 700610 / UA159)).